The primary structure comprises 677 residues: MTQVAKKILVTCALPYANGSIHLGHMLEHIQADVWVRYQRMRGHEVNFICADDAHGTPIMLKAQQLGITPEQMIGEMSQEHQTDFAGFNISYDNYHSTHSDENRELSELIYTRLKENGFIKNRTISQLYDPEKGMFLPDRFVKGTCPKCKSADQYGDNCEVCGATYSPTELIEPKSVVSGATPVMRDSEHFFFDLPSFSEMLQAWTRSGALQEQVANKMQEWFESGLQQWDISRDAPYFGFEIPNAPGKYFYVWLDAPIGYMGSFKNLCDKRGDTTSFDEYWKKDSDAELYHFIGKDIVYFHSLFWPAMLEGSHFRKPTNLFVHGYVTVNGAKMSKSRGTFIKASTWLKHFDADSLRYYYTAKLSSRIDDIDLNLEDFVQRVNADIVNKVVNLASRNAGFINKRFDGVLAAELADPQLYKTFTDAAAVIGEAWESREFGKAIREIMALADIANRYVDEQAPWVVAKQEGRDADLQAICSMGINLFRVLMTYLKPVLPTLSERVEAFLNSELNWDAIEQPLLGHKVNTFKALYNRIDMKQVEALVESSKEEVKAAAAPVTGPLADFPIQETITFDDFAKIDLRVALIENAEFVDGSDKLLRLTLDLGGEKRNVFSGIRSAYPDPQALIGRQTVMVANLAPRKMRFGVSEGMVMAAGPGGKDIFLLSPDDGAKPGQQVK.

Positions 15–25 (PYANGSIHLGH) match the 'HIGH' region motif. Zn(2+) is bound by residues cysteine 146, cysteine 149, cysteine 159, and cysteine 162. The 'KMSKS' region signature appears at 333–337 (KMSKS). Position 336 (lysine 336) interacts with ATP. The tRNA-binding domain maps to 575–677 (DFAKIDLRVA…DGAKPGQQVK (103 aa)).

This sequence belongs to the class-I aminoacyl-tRNA synthetase family. MetG type 1 subfamily. As to quaternary structure, homodimer. Zn(2+) serves as cofactor.

It localises to the cytoplasm. The enzyme catalyses tRNA(Met) + L-methionine + ATP = L-methionyl-tRNA(Met) + AMP + diphosphate. In terms of biological role, is required not only for elongation of protein synthesis but also for the initiation of all mRNA translation through initiator tRNA(fMet) aminoacylation. This Salmonella typhimurium (strain LT2 / SGSC1412 / ATCC 700720) protein is Methionine--tRNA ligase.